Consider the following 175-residue polypeptide: Protein UPS1, mitochondrial (175 aa).

The segment at 1–80 (MVLLHKSTHI…RGITETWIIE (80 aa)) is required for mitochondrial targeting. The 171-residue stretch at 2 to 172 (VLLHKSTHIF…VIQKLEEARN (171 aa)) folds into the PRELI/MSF1 domain. A 1,2-diacyl-sn-glycero-3-phosphate contacts are provided by Tyr-26, Lys-58, Lys-148, and Asn-152.

Belongs to the slowmo family. As to quaternary structure, interacts with MDM35. Found associated with a 170 kDa complex.

It is found in the mitochondrion inner membrane. Its subcellular location is the mitochondrion intermembrane space. Its function is as follows. Required for maintenance of normal mitochondrial morphology. Required for PCP1-dependent processing of MGM1. The UPS1:MDM35 complex mediates the transfer of phosphatidic acid (PA) between liposomes and probably functions as a PA transporter across the mitochondrion intermembrane space. Phosphatidic acid release requires dissociation of the UPS1:MDM35 complex. Phosphatidic acid import is required for cardiolipin (CL) synthesis in the mitochondrial inner membrane. With UPS2, controls the level of cardiolipin in mitochondria. Cardiolipin is a unique phospholipid with four fatty acid chains and is present mainly in the mitochondrial inner membrane where it stabilizes the electron transport chain supercomplex between complexes III and IV through direct interaction of their subunits. This chain is Protein UPS1, mitochondrial (UPS1), found in Saccharomyces cerevisiae (strain ATCC 204508 / S288c) (Baker's yeast).